We begin with the raw amino-acid sequence, 347 residues long: MEKVLVTGGAGYIGSHTVLELLEAGYSPVVIDNFHNAIRGEDSMPESLRRVQELTGRSVEFEEMDILDQAALQHLFKKHSFKAVIHFAGLKAVGESVQKPLDYYRVNLTGTIQLLEIMRAHGVKNLVFSSSATVYGNPQYLPLDEAHPTGGCTNPYGKSKFFIEEMIRDLCRADTAWNAVLLRYFNPIGAHASGRIGEDPQGIPNNLMPYVSQVAIGRREALNVFGDDYATEDGTGVRDYIHVVDLAKGHIAALKKLKEQCGCRTYNLGTGTGYSVLQMVQAMEKASGKKIPYKVVARREGDVAACYANPSLAHEELGWTAALGLDRMCEDLWRWQKQNPSGFGAQA.

NAD(+) is bound by residues 11-13 (GYI), 32-36 (DNFHN), 65-66 (DI), F87, and K91. 131 to 133 (SAT) contributes to the substrate binding site. Y156 acts as the Proton acceptor in catalysis. Positions 160 and 184 each coordinate NAD(+). Residues 184–186 (YFN), 205–207 (NNL), 223–225 (NVF), R238, and 299–302 (REGD) each bind substrate.

It belongs to the NAD(P)-dependent epimerase/dehydratase family. As to quaternary structure, homodimer. The cofactor is NAD(+).

It carries out the reaction UDP-alpha-D-glucose = UDP-alpha-D-galactose. It catalyses the reaction UDP-N-acetyl-alpha-D-glucosamine = UDP-N-acetyl-alpha-D-galactosamine. Its pathway is carbohydrate metabolism; galactose metabolism. Its function is as follows. Catalyzes two distinct but analogous reactions: the reversible epimerization of UDP-glucose to UDP-galactose and the reversible epimerization of UDP-N-acetylglucosamine to UDP-N-acetylgalactosamine. The reaction with UDP-Gal plays a critical role in the Leloir pathway of galactose catabolism in which galactose is converted to the glycolytic intermediate glucose 6-phosphate. It contributes to the catabolism of dietary galactose and enables the endogenous biosynthesis of both UDP-Gal and UDP-GalNAc when exogenous sources are limited. Both UDP-sugar interconversions are important in the synthesis of glycoproteins and glycolipids. This is UDP-glucose 4-epimerase (Gale) from Mus musculus (Mouse).